A 77-amino-acid chain; its full sequence is Large ribosomal subunit protein bL31 (77 aa).

This sequence belongs to the bacterial ribosomal protein bL31 family. Type A subfamily. Part of the 50S ribosomal subunit.

Functionally, binds the 23S rRNA. The protein is Large ribosomal subunit protein bL31 of Microcystis aeruginosa (strain NIES-843 / IAM M-2473).